A 123-amino-acid polypeptide reads, in one-letter code: Small ribosomal subunit protein uS12 (123 aa).

Residue Asp89 is modified to 3-methylthioaspartic acid.

Belongs to the universal ribosomal protein uS12 family. Part of the 30S ribosomal subunit. Contacts proteins S8 and S17. May interact with IF1 in the 30S initiation complex.

Functionally, with S4 and S5 plays an important role in translational accuracy. Interacts with and stabilizes bases of the 16S rRNA that are involved in tRNA selection in the A site and with the mRNA backbone. Located at the interface of the 30S and 50S subunits, it traverses the body of the 30S subunit contacting proteins on the other side and probably holding the rRNA structure together. The combined cluster of proteins S8, S12 and S17 appears to hold together the shoulder and platform of the 30S subunit. The chain is Small ribosomal subunit protein uS12 from Chelativorans sp. (strain BNC1).